An 81-amino-acid polypeptide reads, in one-letter code: Short neurotoxin 1 (81 aa).

Residues 1 to 21 (MKTLLLTLVVVTIVCLDLGYT) form the signal peptide. 4 disulfides stabilise this stretch: cysteine 24-cysteine 43, cysteine 38-cysteine 60, cysteine 62-cysteine 73, and cysteine 74-cysteine 79.

This sequence belongs to the three-finger toxin family. Short-chain subfamily. Type I alpha-neurotoxin sub-subfamily. Expressed by the venom gland.

Its subcellular location is the secreted. Functionally, binds to muscle nicotinic acetylcholine receptor (nAChR) and inhibit acetylcholine from binding to the receptor, thereby impairing neuromuscular transmission. The sequence is that of Short neurotoxin 1 from Cryptophis nigrescens (Eastern small-eyed snake).